Here is a 372-residue protein sequence, read N- to C-terminus: Peroxisomal biogenesis factor 3 (372 aa).

Residues 1-15 (MLRSMWNFLKRHKKK) lie on the Cytoplasmic side of the membrane. Residues 1–45 (MLRSMWNFLKRHKKKCIFLGTVLGGVYILGKYGQKKIREIQEREA) are targeting to peroxisomes. Residues 16–36 (CIFLGTVLGGVYILGKYGQKK) traverse the membrane as a helical segment. The Peroxisomal portion of the chain corresponds to 37 to 116 (IREIQEREAA…LKIISFTRSI (80 aa)). A helical transmembrane segment spans residues 117-140 (VAVYSTCMLVVLLRVQLNIIGGYI). An interaction with PEX19 region spans residues 120–136 (YSTCMLVVLLRVQLNII). At 141-372 (YLDNATVGKN…AFSTPQQLEK (232 aa)) the chain is on the cytoplasmic side.

The protein belongs to the peroxin-3 family. In terms of assembly, interacts with PEX19. In terms of tissue distribution, identified in all tissues analyzed, with the strongest expression in liver and in testis.

Its subcellular location is the peroxisome membrane. Functionally, involved in peroxisome biosynthesis and integrity. Assembles membrane vesicles before the matrix proteins are translocated. As a docking factor for PEX19, is necessary for the import of peroxisomal membrane proteins in the peroxisomes. The polypeptide is Peroxisomal biogenesis factor 3 (Pex3) (Mus musculus (Mouse)).